Reading from the N-terminus, the 640-residue chain is Chaperone protein DnaK (640 aa).

Phosphothreonine; by autocatalysis is present on threonine 196. Disordered regions lie at residues 487 to 526 (GKEQ…KEEI) and 593 to 640 (SHLY…GNDK). The span at 501-526 (TDAEISKMKEDAKEHAAEDQKRKEEI) shows a compositional bias: basic and acidic residues. The span at 595-613 (LYQSQGPESSQPETAAQSD) shows a compositional bias: polar residues. Residues 630–640 (AEYEVIDGNDK) show a composition bias toward acidic residues.

This sequence belongs to the heat shock protein 70 family.

In terms of biological role, acts as a chaperone. This is Chaperone protein DnaK from Pelodictyon phaeoclathratiforme (strain DSM 5477 / BU-1).